Here is a 129-residue protein sequence, read N- to C-terminus: Phosphoribosyl-AMP cyclohydrolase (129 aa).

Residue Asp-82 participates in Mg(2+) binding. Cys-83 provides a ligand contact to Zn(2+). 2 residues coordinate Mg(2+): Asp-84 and Asp-86. Zn(2+) contacts are provided by Cys-99 and Cys-106.

Belongs to the PRA-CH family. In terms of assembly, homodimer. It depends on Mg(2+) as a cofactor. Zn(2+) serves as cofactor.

Its subcellular location is the cytoplasm. The enzyme catalyses 1-(5-phospho-beta-D-ribosyl)-5'-AMP + H2O = 1-(5-phospho-beta-D-ribosyl)-5-[(5-phospho-beta-D-ribosylamino)methylideneamino]imidazole-4-carboxamide. It functions in the pathway amino-acid biosynthesis; L-histidine biosynthesis; L-histidine from 5-phospho-alpha-D-ribose 1-diphosphate: step 3/9. Functionally, catalyzes the hydrolysis of the adenine ring of phosphoribosyl-AMP. This chain is Phosphoribosyl-AMP cyclohydrolase, found in Methanosarcina barkeri (strain Fusaro / DSM 804).